The primary structure comprises 124 residues: Small ribosomal subunit protein uS12 (124 aa).

Asp89 is subject to 3-methylthioaspartic acid. Residues 105-124 (QGVKNRKQARSRYGAKKEKS) are disordered. Positions 108-118 (KNRKQARSRYG) are enriched in basic residues.

This sequence belongs to the universal ribosomal protein uS12 family. In terms of assembly, part of the 30S ribosomal subunit. Contacts proteins S8 and S17. May interact with IF1 in the 30S initiation complex.

Its function is as follows. With S4 and S5 plays an important role in translational accuracy. In terms of biological role, interacts with and stabilizes bases of the 16S rRNA that are involved in tRNA selection in the A site and with the mRNA backbone. Located at the interface of the 30S and 50S subunits, it traverses the body of the 30S subunit contacting proteins on the other side and probably holding the rRNA structure together. The combined cluster of proteins S8, S12 and S17 appears to hold together the shoulder and platform of the 30S subunit. This is Small ribosomal subunit protein uS12 (rpsL) from Mycolicibacterium smegmatis (strain ATCC 700084 / mc(2)155) (Mycobacterium smegmatis).